We begin with the raw amino-acid sequence, 130 residues long: Small ribosomal subunit protein uS8 (130 aa).

It belongs to the universal ribosomal protein uS8 family.

It localises to the cytoplasm. In Brassica napus (Rape), this protein is Small ribosomal subunit protein uS8 (RPS15A).